A 330-amino-acid polypeptide reads, in one-letter code: Type I restriction enzyme MpnII specificity subunit (330 aa).

This sequence belongs to the type-I restriction system S methylase family. As to quaternary structure, the methyltransferase is composed of M and S polypeptides.

In terms of biological role, the specificity (S) subunit of a type I restriction enzyme; this subunit dictates DNA sequence specificity. The M and S subunits together form a methyltransferase (MTase) that probably methylates A-2 on the top strand and A-3 on the bottom strand of the sequence 5'-GAN(7)TAY-3'. As the bacterial DNA is methylated on this sequence and this is the only type I methylase in the genome, it is probably responsible for all of the methylation on this site in the genome. The R subunit has multiple frameshifts and is probably not expressed in this bacteria. In Mycoplasma pneumoniae (strain ATCC 29342 / M129 / Subtype 1) (Mycoplasmoides pneumoniae), this protein is Type I restriction enzyme MpnII specificity subunit.